A 173-amino-acid polypeptide reads, in one-letter code: NADH-ubiquinone oxidoreductase chain 6 (173 aa).

5 helical membrane passes run 1–21, 27–47, 48–68, 87–107, and 139–159; these read MTYFMLFLGLCFVLGGLGVAS, YGVVGLVLASVVGCGWLLSLG, VSFVSLVLFMVYLGGMLVVFV, VVGYGVSFIAVLVVGVVIGGL, and CGVGMFLVAGWGLLLTLFVVL.

This sequence belongs to the complex I subunit 6 family.

The protein resides in the mitochondrion membrane. The catalysed reaction is a ubiquinone + NADH + 5 H(+)(in) = a ubiquinol + NAD(+) + 4 H(+)(out). In terms of biological role, core subunit of the mitochondrial membrane respiratory chain NADH dehydrogenase (Complex I) that is believed to belong to the minimal assembly required for catalysis. Complex I functions in the transfer of electrons from NADH to the respiratory chain. The immediate electron acceptor for the enzyme is believed to be ubiquinone. This Synthliboramphus hypoleucus (Guadalupe murrelet) protein is NADH-ubiquinone oxidoreductase chain 6 (MT-ND6).